A 615-amino-acid chain; its full sequence is DNA mismatch repair protein MutL (615 aa).

The interval 362–397 (HFAEPAVREPVAPRYSPAPASGSRPAASWPNAQPGY) is disordered. The segment covering 373–391 (APRYSPAPASGSRPAASWP) has biased composition (low complexity).

This sequence belongs to the DNA mismatch repair MutL/HexB family.

In terms of biological role, this protein is involved in the repair of mismatches in DNA. It is required for dam-dependent methyl-directed DNA mismatch repair. May act as a 'molecular matchmaker', a protein that promotes the formation of a stable complex between two or more DNA-binding proteins in an ATP-dependent manner without itself being part of a final effector complex. The polypeptide is DNA mismatch repair protein MutL (Escherichia coli O45:K1 (strain S88 / ExPEC)).